We begin with the raw amino-acid sequence, 184 residues long: Photosystem I assembly protein Ycf4 (184 aa).

A run of 2 helical transmembrane segments spans residues F22–S42 and I57–S77.

It belongs to the Ycf4 family.

It is found in the plastid. The protein localises to the chloroplast thylakoid membrane. In terms of biological role, seems to be required for the assembly of the photosystem I complex. The sequence is that of Photosystem I assembly protein Ycf4 from Platanus occidentalis (Sycamore).